The following is a 1087-amino-acid chain: Exportin-7 (1087 aa).

Ala2 carries the post-translational modification N-acetylalanine. The region spanning Ala30–Thr96 is the Importin N-terminal domain. The residue at position 570 (Ser570) is a Phosphoserine.

This sequence belongs to the exportin family. In terms of assembly, binds to nucleoporins. Found in a complex with XPO7, EIF4A1, ARHGAP1, VPS26A, VPS29, VPS35 and SFN. Interacts with ARHGAP1 and SFN. Interacts with Ran and cargo proteins in a GTP-dependent manner. As to expression, highly expressed in testis and spleen, moderate in kidney and liver and low in heart, brain, lung and skeletal muscle.

The protein localises to the cytoplasm. The protein resides in the nucleus. In terms of biological role, mediates the nuclear export of proteins (cargos) with broad substrate specificity. In the nucleus binds cooperatively to its cargo and to the GTPase Ran in its active GTP-bound form. Docking of this trimeric complex to the nuclear pore complex (NPC) is mediated through binding to nucleoporins. Upon transit of a nuclear export complex into the cytoplasm, disassembling of the complex and hydrolysis of Ran-GTP to Ran-GDP (induced by RANBP1 and RANGAP1, respectively) cause release of the cargo from the export receptor. XPO7 then return to the nuclear compartment and mediate another round of transport. The directionality of nuclear export is thought to be conferred by an asymmetric distribution of the GTP- and GDP-bound forms of Ran between the cytoplasm and nucleus. This Mus musculus (Mouse) protein is Exportin-7 (Xpo7).